Here is a 339-residue protein sequence, read N- to C-terminus: NADH-quinone oxidoreductase subunit H (339 aa).

Transmembrane regions (helical) follow at residues 9 to 29, 50 to 70, 82 to 102, 115 to 135, 161 to 181, 187 to 207, 235 to 255, 275 to 295, and 311 to 331; these read IFPL…LILC, PNVV…KLLF, ILFI…WAVI, VGVL…IIAG, MGLV…SEII, MPWW…ISVL, MGFA…SAMT, IPGF…FLWI, and GWKV…SVLV.

The protein belongs to the complex I subunit 1 family. NDH-1 is composed of 14 different subunits. Subunits NuoA, H, J, K, L, M, N constitute the membrane sector of the complex.

The protein localises to the cell inner membrane. It carries out the reaction a quinone + NADH + 5 H(+)(in) = a quinol + NAD(+) + 4 H(+)(out). In terms of biological role, NDH-1 shuttles electrons from NADH, via FMN and iron-sulfur (Fe-S) centers, to quinones in the respiratory chain. The immediate electron acceptor for the enzyme in this species is believed to be ubiquinone. Couples the redox reaction to proton translocation (for every two electrons transferred, four hydrogen ions are translocated across the cytoplasmic membrane), and thus conserves the redox energy in a proton gradient. This subunit may bind ubiquinone. This Rickettsia peacockii (strain Rustic) protein is NADH-quinone oxidoreductase subunit H.